The sequence spans 891 residues: Echinoderm microtubule-associated protein-like elp-1 (891 aa).

The segment covering 77–88 has biased composition (polar residues); sequence DQSRSPTCSGYS. The segment at 77–167 is disordered; it reads DQSRSPTCSG…ARGSPMRKWV (91 aa). The span at 104–117 shows a compositional bias: low complexity; it reads SPSHAPPRSSHANS. Residues 118–131 show a composition bias toward polar residues; the sequence is KSLYINGMNNNSEE. 9 WD repeats span residues 330 to 401, 404 to 447, 499 to 537, 541 to 579, 626 to 664, 708 to 747, 753 to 792, 816 to 853, and 859 to 890; these read GHTC…TLMV, GFEK…REGE, DKPK…TTKQ, VHPG…RTRR, GDPG…VEFS, EGTA…NLLV, HIPA…CDGT, SSNG…VTAG, and GHGR…EWCL.

This sequence belongs to the WD repeat EMAP family.

It localises to the cytoplasm. The protein localises to the cytoskeleton. In terms of biological role, may modify the assembly dynamics of microtubules, such that microtubules are slightly longer, but more dynamic. The sequence is that of Echinoderm microtubule-associated protein-like elp-1 (elp-1) from Caenorhabditis elegans.